Here is a 66-residue protein sequence, read N- to C-terminus: Large ribosomal subunit protein bL33c (66 aa).

It belongs to the bacterial ribosomal protein bL33 family.

The protein resides in the plastid. Its subcellular location is the chloroplast. In Adiantum capillus-veneris (Maidenhair fern), this protein is Large ribosomal subunit protein bL33c.